Here is a 462-residue protein sequence, read N- to C-terminus: Semenogelin-1 (462 aa).

An N-terminal signal peptide occupies residues 1–23 (MKPNIIFVLSLLLILEKQAAVMG). Gln24 bears the Pyrrolidone carboxylic acid mark. The disordered stretch occupies residues 24–61 (QKGGSKGRLPSEFSQFPHGQKGQHYSGQKGKQQTESKG). The segment covering 46–61 (QHYSGQKGKQQTESKG) has biased composition (polar residues). 3 tandem repeats follow at residues 70 to 129 (HVDA…VVIH), 141 to 200 (NPSQ…QTEE), and 201 to 260 (LVAN…QDEL). Residues 70–439 (HVDANDHDQS…SHGGLDIVII (370 aa)) are repeat-rich region. Disordered regions lie at residues 131 to 157 (KGGK…GISS) and 173 to 194 (KEQT…QSSY). Residues 138–157 (GTQNPSQDQGNSPSGKGISS) show a composition bias toward polar residues. Residues 164–283 (ERLWVHGLSK…NQDQQHGRKA (120 aa)) are interaction with EPPIN. The interval 261 to 380 (LVYNKNQHQT…QRSIYSQTEK (120 aa)) is 2 X 60 AA tandem repeats, type 1. Residues 270 to 432 (TKNLNQDQQH…KGRHQHGSHG (163 aa)) are disordered. 3 stretches are compositionally biased toward polar residues: residues 308–317 (DVSQSSIYSQ), 324–335 (GKSQKQITIPSQ), and 343–352 (ANKISYQSSS). A 3-2 repeat occupies 381–439 (LVAGKSQIQAPNPKQEPWHGENAKGESGQSTNREQDLLSHEQKGRHQHGSHGGLDIVII). Basic and acidic residues predominate over residues 413 to 424 (REQDLLSHEQKG).

This sequence belongs to the semenogelin family. As to quaternary structure, occurs in disulfide-linked complexes which may also contain two less abundant 71- and 76-kDa semenogelin-related polypeptides. Interacts with EPPIN (via C-terminus); Cys-239 is a critical amino acid for both binding to EPPIN. In terms of processing, transglutaminase substrate. Rapidly cleaved after ejaculation by KLK3/PSA, resulting in liquefaction of the semen coagulum and the progressive release of motile spermatozoa. In terms of tissue distribution, seminal vesicle.

The protein resides in the secreted. Its function is as follows. Predominant protein in semen. It participates in the formation of a gel matrix entrapping the accessory gland secretions and ejaculated spermatozoa. Fragments of semenogelin and/or fragments of the related proteins may contribute to the activation of progressive sperm movements as the gel-forming proteins are fragmented by KLK3/PSA. Alpha-inhibin-92 and alpha-inhibin-31, derived from the proteolytic degradation of semenogelin, inhibit the secretion of pituitary follicle-stimulating hormone. This Homo sapiens (Human) protein is Semenogelin-1 (SEMG1).